Reading from the N-terminus, the 259-residue chain is 3-deoxy-manno-octulosonate cytidylyltransferase (259 aa).

It belongs to the KdsB family.

The protein localises to the cytoplasm. The enzyme catalyses 3-deoxy-alpha-D-manno-oct-2-ulosonate + CTP = CMP-3-deoxy-beta-D-manno-octulosonate + diphosphate. It participates in nucleotide-sugar biosynthesis; CMP-3-deoxy-D-manno-octulosonate biosynthesis; CMP-3-deoxy-D-manno-octulosonate from 3-deoxy-D-manno-octulosonate and CTP: step 1/1. It functions in the pathway bacterial outer membrane biogenesis; lipopolysaccharide biosynthesis. Its function is as follows. Activates KDO (a required 8-carbon sugar) for incorporation into bacterial lipopolysaccharide in Gram-negative bacteria. In Aeromonas salmonicida (strain A449), this protein is 3-deoxy-manno-octulosonate cytidylyltransferase.